The chain runs to 85 residues: Fungal defensin triintsin (85 aa).

The first 21 residues, 1 to 21 (MQFTKLATVLIVSLMGSAAIA), serve as a signal peptide directing secretion. Residues 22–47 (APSVDNAPAVAAEEVAAAPAENLEKR) constitute a propeptide that is removed on maturation. 3 disulfides stabilise this stretch: C51–C72, C58–C80, and C62–C82.

It belongs to the invertebrate defensin family. Disulfide bonds are essential for antimicrobial activity.

Its subcellular location is the secreted. In terms of biological role, antimicrobial peptide with broad-spectrum activity against Gram-positive bacteria, Gram-negative bacteria, and fungi. Also inhibits clinical isolates, including methicillin-resistant S.aureus (MRSA) (MIC=32 uM), K.pneumoniae, C.albicans and C.parapsilosis. Displays minimal inhibitory concentration (MIC) values similar to minimal bactericidal concentrations (MBC), suggesting a disruptive mechanism mode of action associated with membrane lysis. In vitro, shows hemolytic activity against human red blood cells. The chain is Fungal defensin triintsin from Trichophyton interdigitale (strain MR816).